A 194-amino-acid polypeptide reads, in one-letter code: ATP synthase subunit 5, mitochondrial (194 aa).

As to quaternary structure, F-type ATP synthases have 2 components, the catalytic core F(1) and the membrane-embedded component F(0), linked together by a central stalk and a peripheral stalk. The central stalk, also called rotor shaft, is often seen as part of F(1). The peripheral stalk is seen as part of F(0). F(0) contains the membrane channel next to the rotor. F-type ATP synthases form dimers but each monomer functions independently in ATP generation. The dimer consists of 18 different polypeptides: ATP1 (subunit alpha, part of F(1), 3 molecules per monomer), ATP2 (subunit beta, part of F(1), 3 molecules per monomer), ATP3 (subunit gamma, part of the central stalk), ATP4 (subunit b, part of the peripheral stalk), ATP5/OSCP (subunit 5/OSCP, part of the peripheral stalk), ATP6 (subunit a, part of the peripheral stalk), ATP7 (subunit d, part of the peripheral stalk), ATP8 (subunit 8, part of the peripheral stalk), OLI1 (subunit c, part of the rotor, 10 molecules per monomer), ATP14 (subunit h, part of the peripheral stalk), ATP15 (subunit epsilon, part of the central stalk), ATP16 (subunit delta, part of the central stalk), ATP17 (subunit f, part of the peripheral stalk), ATP18 (subunit i/j, part of the peripheral stalk). Dimer-specific subunits are ATP19 (subunit k, at interface between monomers), ATP20 (subunit g, at interface between monomers), TIM11 (subunit e, at interface between monomers). Also contains subunit L.

It is found in the mitochondrion inner membrane. Its function is as follows. Mitochondrial membrane ATP synthase (F(1)F(0) ATP synthase or Complex V) produces ATP from ADP in the presence of a proton gradient across the membrane which is generated by electron transport complexes of the respiratory chain. F-type ATP synthases consist of two structural domains, F(1) - containing the extramembraneous catalytic core, and F(0) - containing the membrane proton channel, linked together by a central stalk and a peripheral stalk. During catalysis, ATP synthesis in the catalytic domain of F(1) is coupled via a rotary mechanism of the central stalk subunits to proton translocation. Part of the complex F(0) domain and the peripheral stalk, which acts as a stator to hold the catalytic alpha/ATP1(3)beta/ATP2(3) subcomplex and subunit a/ATP6 static relative to the rotary elements. This is ATP synthase subunit 5, mitochondrial from Pichia angusta (Yeast).